Consider the following 86-residue polypeptide: RNA-binding protein Hfq (86 aa).

The Sm domain maps to 12 to 73; the sequence is DIFLNQVRKE…ISTITPQKPV (62 aa).

Belongs to the Hfq family. As to quaternary structure, homohexamer.

Functionally, RNA chaperone that binds small regulatory RNA (sRNAs) and mRNAs to facilitate mRNA translational regulation in response to envelope stress, environmental stress and changes in metabolite concentrations. Also binds with high specificity to tRNAs. This is RNA-binding protein Hfq from Thermoanaerobacter pseudethanolicus (strain ATCC 33223 / 39E) (Clostridium thermohydrosulfuricum).